Consider the following 181-residue polypeptide: ATP synthase subunit b (181 aa).

A helical membrane pass occupies residues 24–44 (LFPNLPNFIAHLLATIVLVIV).

Belongs to the ATPase B chain family. In terms of assembly, F-type ATPases have 2 components, F(1) - the catalytic core - and F(0) - the membrane proton channel. F(1) has five subunits: alpha(3), beta(3), gamma(1), delta(1), epsilon(1). F(0) has three main subunits: a(1), b(2) and c(10-14). The alpha and beta chains form an alternating ring which encloses part of the gamma chain. F(1) is attached to F(0) by a central stalk formed by the gamma and epsilon chains, while a peripheral stalk is formed by the delta and b chains.

It localises to the cell membrane. In terms of biological role, f(1)F(0) ATP synthase produces ATP from ADP in the presence of a proton or sodium gradient. F-type ATPases consist of two structural domains, F(1) containing the extramembraneous catalytic core and F(0) containing the membrane proton channel, linked together by a central stalk and a peripheral stalk. During catalysis, ATP synthesis in the catalytic domain of F(1) is coupled via a rotary mechanism of the central stalk subunits to proton translocation. Functionally, component of the F(0) channel, it forms part of the peripheral stalk, linking F(1) to F(0). The protein is ATP synthase subunit b of Mycoplasma capricolum subsp. capricolum (strain California kid / ATCC 27343 / NCTC 10154).